The following is a 596-amino-acid chain: NADH-quinone oxidoreductase subunit C/D (596 aa).

An NADH dehydrogenase I subunit C region spans residues 1 to 186 (MMNDNKYIHI…PAFTLTRKKE (186 aa)). Residues 210-596 (DFMFLNLGPN…IDFVMSDVDR (387 aa)) form an NADH dehydrogenase I subunit D region.

In the N-terminal section; belongs to the complex I 30 kDa subunit family. It in the C-terminal section; belongs to the complex I 49 kDa subunit family. As to quaternary structure, NDH-1 is composed of 13 different subunits. Subunits NuoB, CD, E, F, and G constitute the peripheral sector of the complex.

It is found in the cell inner membrane. The enzyme catalyses a quinone + NADH + 5 H(+)(in) = a quinol + NAD(+) + 4 H(+)(out). In terms of biological role, NDH-1 shuttles electrons from NADH, via FMN and iron-sulfur (Fe-S) centers, to quinones in the respiratory chain. The immediate electron acceptor for the enzyme in this species is believed to be ubiquinone. Couples the redox reaction to proton translocation (for every two electrons transferred, four hydrogen ions are translocated across the cytoplasmic membrane), and thus conserves the redox energy in a proton gradient. In Blochmanniella floridana, this protein is NADH-quinone oxidoreductase subunit C/D.